A 303-amino-acid chain; its full sequence is uncharacterized protein (303 aa).

It is found in the cytoplasm. This is an uncharacterized protein from Saccharomyces cerevisiae (strain ATCC 204508 / S288c) (Baker's yeast).